Consider the following 405-residue polypeptide: Pentatricopeptide repeat-containing protein At3g14580, mitochondrial (405 aa).

A mitochondrion-targeting transit peptide spans 1–37 (MILRRLVLSATSNSNPRRSQSLSSSGVRILSSSSSDR). The segment at 13-44 (NSNPRRSQSLSSSGVRILSSSSSDRYTSSSQR) is disordered. PPR repeat units follow at residues 94-124 (TESLYALMINKFGQAKMYDEIEEVMRTIKLE), 130-165 (SEEFFYNLMRIYGNLAGRINRAIEILFGMPDFGCWP), 166-200 (SSKSFNFILNLLVSAKLFDEIHKIFVSAPKLGVEI), 201-235 (DACCLNILIKGLCESGNLEAALQLLDEFPQQKSRP), 236-270 (NVMTFSPLIRGFCNKGKFEEAFKLLERMEKERIEP), 271-305 (DTITFNILISGLRKKGRVEEGIDLLERMKVKGCEP), 306-340 (NPGTYQEVLYGLLDKKRNLEAKEMMSQMISWGMRP), and 341-375 (SFLSYKKMVLGLCETKSVVEMDWVLRQMVNHGFVP).

It belongs to the PPR family. P subfamily.

It localises to the mitochondrion. The sequence is that of Pentatricopeptide repeat-containing protein At3g14580, mitochondrial from Arabidopsis thaliana (Mouse-ear cress).